Reading from the N-terminus, the 189-residue chain is ComE operon protein 2 (189 aa).

Residues 5-132 (SWNQYFMAQS…PYAQELFEQA (128 aa)) enclose the CMP/dCMP-type deaminase domain. His70 is a binding site for Zn(2+). Residue Glu72 is the Proton donor of the active site. The Zn(2+) site is built by Cys98 and Cys101.

Belongs to the cytidine and deoxycytidylate deaminase family. Requires Zn(2+) as cofactor.

Functionally, dispensable for transformability. The polypeptide is ComE operon protein 2 (comEB) (Bacillus subtilis (strain 168)).